Here is a 364-residue protein sequence, read N- to C-terminus: D-alanine--D-alanine ligase (364 aa).

Residues 140–346 (KKLALLEGIP…YSQLIDKLIS (207 aa)) form the ATP-grasp domain. Residue 173-228 (ESEFSYPVFVKPANSGSSVGISKAKDREDLVLAIHEAFLYDTKILIEQAINAREIE) coordinates ATP. Residues Asp-299, Glu-313, and Asn-315 each coordinate Mg(2+).

Belongs to the D-alanine--D-alanine ligase family. Mg(2+) serves as cofactor. It depends on Mn(2+) as a cofactor.

Its subcellular location is the cytoplasm. It catalyses the reaction 2 D-alanine + ATP = D-alanyl-D-alanine + ADP + phosphate + H(+). It participates in cell wall biogenesis; peptidoglycan biosynthesis. In terms of biological role, cell wall formation. The protein is D-alanine--D-alanine ligase of Caldicellulosiruptor bescii (strain ATCC BAA-1888 / DSM 6725 / KCTC 15123 / Z-1320) (Anaerocellum thermophilum).